We begin with the raw amino-acid sequence, 327 residues long: MAPGDKKQIIFVITTIGRPSSTVVPFKNLEVSEWSYKKGIKNGYDDYRDPPSPKPLPKSKQEPNADDKVGDIEYDEMVSVRDGYYSDVCRLTCTEDTKIFIADHISLWRYIMDNAEKLPNYVVIMEDDNTITGEGFITNLDNITKVLNDNNVDILQLVTHTKLLKDRNSQHLMLLPDLEAFKGSFDVSLSAYIIRQEAVRKLYSYFTNNKPSFDISLEILRIENTLGITRYVVDNDRYVYHDYKLANEFMKNKKNRLSIKSRIDGWIMDNWPSFYHRMYYPLFSVFGKYDITMMFLIAIVIIIGLAIFDINNKLLWLLSGVFLAYSM.

Residues 41–69 form a disordered region; sequence KNGYDDYRDPPSPKPLPKSKQEPNADDKV. The span at 59–69 shows a compositional bias: basic and acidic residues; it reads SKQEPNADDKV. Residues 291–311 form a helical membrane-spanning segment; the sequence is ITMMFLIAIVIIIGLAIFDIN.

The protein belongs to the poxviruses protein p35 family.

It localises to the virion membrane. In terms of biological role, envelope protein that binds to the cell surface to provide virion attachment to target cell. The polypeptide is Immunodominant envelope protein p35 (Fowlpox virus (strain NVSL) (FPV)).